We begin with the raw amino-acid sequence, 360 residues long: Peptide chain release factor 1 (360 aa).

Residue Gln-235 is modified to N5-methylglutamine. A compositionally biased stretch (basic and acidic residues) spans 280–293; sequence DKQSHEQQAKEAAT. Residues 280–300 form a disordered region; it reads DKQSHEQQAKEAATRKSLIGS.

The protein belongs to the prokaryotic/mitochondrial release factor family. Post-translationally, methylated by PrmC. Methylation increases the termination efficiency of RF1.

The protein resides in the cytoplasm. Functionally, peptide chain release factor 1 directs the termination of translation in response to the peptide chain termination codons UAG and UAA. This Paraburkholderia xenovorans (strain LB400) protein is Peptide chain release factor 1.